Here is a 329-residue protein sequence, read N- to C-terminus: Beta-ketoacyl-[acyl-carrier-protein] synthase III (329 aa).

Residues C113 and H255 contribute to the active site. The ACP-binding stretch occupies residues 256–260 (QANQR). The active site involves N285.

This sequence belongs to the thiolase-like superfamily. FabH family. In terms of assembly, homodimer.

Its subcellular location is the cytoplasm. The enzyme catalyses malonyl-[ACP] + acetyl-CoA + H(+) = 3-oxobutanoyl-[ACP] + CO2 + CoA. Its pathway is lipid metabolism; fatty acid biosynthesis. In terms of biological role, catalyzes the condensation reaction of fatty acid synthesis by the addition to an acyl acceptor of two carbons from malonyl-ACP. Catalyzes the first condensation reaction which initiates fatty acid synthesis and may therefore play a role in governing the total rate of fatty acid production. Possesses both acetoacetyl-ACP synthase and acetyl transacylase activities. Its substrate specificity determines the biosynthesis of branched-chain and/or straight-chain of fatty acids. This Chlorobium luteolum (strain DSM 273 / BCRC 81028 / 2530) (Pelodictyon luteolum) protein is Beta-ketoacyl-[acyl-carrier-protein] synthase III.